Reading from the N-terminus, the 284-residue chain is Nucleotide-binding protein NMA0948 (284 aa).

Gly-8–Ser-15 is a binding site for ATP. Asp-58 to Ser-61 is a binding site for GTP.

The protein belongs to the RapZ-like family.

Its function is as follows. Displays ATPase and GTPase activities. This Neisseria meningitidis serogroup A / serotype 4A (strain DSM 15465 / Z2491) protein is Nucleotide-binding protein NMA0948.